A 207-amino-acid polypeptide reads, in one-letter code: LexA repressor (207 aa).

Positions 28 to 48 form a DNA-binding region, H-T-H motif; it reads VREIGEAVGLASSSTVHGHLA. Catalysis depends on for autocatalytic cleavage activity residues Ser-129 and Lys-167.

It belongs to the peptidase S24 family. As to quaternary structure, homodimer.

The enzyme catalyses Hydrolysis of Ala-|-Gly bond in repressor LexA.. In terms of biological role, represses a number of genes involved in the response to DNA damage (SOS response), including recA and lexA. In the presence of single-stranded DNA, RecA interacts with LexA causing an autocatalytic cleavage which disrupts the DNA-binding part of LexA, leading to derepression of the SOS regulon and eventually DNA repair. The chain is LexA repressor from Geobacillus sp. (strain WCH70).